A 55-amino-acid polypeptide reads, in one-letter code: MKKEIQVQGVRYYVESEDDLVSVAHELAKMGYTVQQIANALGVSERKVRRYLESC.

This is an uncharacterized protein from Sulfolobus islandicus rod-shaped virus 1 (SIRV-1).